The sequence spans 295 residues: Small ribosomal subunit protein uS2 (295 aa).

The disordered stretch occupies residues 232–295; the sequence is RRRGTDEKPE…DEQPAAAAAE (64 aa). The segment covering 252–287 has biased composition (basic and acidic residues); the sequence is EWERELLEEPKKSDEQPAKSDELPVKTDEQPTKSDE.

The protein belongs to the universal ribosomal protein uS2 family.

This is Small ribosomal subunit protein uS2 from Salinispora tropica (strain ATCC BAA-916 / DSM 44818 / JCM 13857 / NBRC 105044 / CNB-440).